Here is a 447-residue protein sequence, read N- to C-terminus: Cysteine--tRNA ligase (447 aa).

C28 lines the Zn(2+) pocket. The short motif at 30-40 (PTVYNYIHIGN) is the 'HIGH' region element. Positions 211, 236, and 240 each coordinate Zn(2+). The short motif at 268-272 (KMSKS) is the 'KMSKS' region element. K271 contacts ATP.

Belongs to the class-I aminoacyl-tRNA synthetase family. In terms of assembly, monomer. Zn(2+) serves as cofactor.

It is found in the cytoplasm. The enzyme catalyses tRNA(Cys) + L-cysteine + ATP = L-cysteinyl-tRNA(Cys) + AMP + diphosphate. This is Cysteine--tRNA ligase from Streptococcus pyogenes serotype M1.